A 303-amino-acid polypeptide reads, in one-letter code: Nodulation protein D (303 aa).

Positions 6–63 (LDLNLLVALDALMTERKLTAAARSINLSQPAMSAAISRLRDYFRDDLFIMQRRELVPT) constitute an HTH lysR-type domain. A DNA-binding region (H-T-H motif) is located at residues 23-42 (LTAAARSINLSQPAMSAAIS).

This sequence belongs to the LysR transcriptional regulatory family.

Functionally, nodD regulates the expression of the nodABCFE genes which encode other nodulation proteins. NodD is also a negative regulator of its own expression. Binds flavonoids as inducers. In Rhizobium leguminosarum bv. viciae, this protein is Nodulation protein D (nodD).